We begin with the raw amino-acid sequence, 5061 residues long: E3 ubiquitin-protein ligase rnf213-beta (5061 aa).

Basic residues predominate over residues 1 to 12 (MTRKRKSGKKGK). A disordered region spans residues 1 to 334 (MTRKRKSGKK…QRKPSPVRAP (334 aa)). Polar residues-rich tracts occupy residues 24–52 (GGSTSSSTTQKEGAQKGDGSSSSSTTQKD) and 75–87 (SDGSTSSSTTNKE). A compositionally biased stretch (basic residues) spans 100–110 (LQKKGPQKRKG). 2 stretches are compositionally biased toward polar residues: residues 127–163 (QTSYPSQARSRSHGQHNISTTESGPLSKEAQTQTSAS) and 172–200 (TETVGQASQQTQTEINGNTETAEVSQPPQ). 2 stretches are compositionally biased toward basic and acidic residues: residues 217-229 (KGSESDGEKEESV) and 236-289 (LSEI…EEPK). Positions 292 to 301 (AAAAATGKTG) are enriched in low complexity. Residues 306–322 (EQTNQIEANQDSTMESK) show a composition bias toward polar residues. ATP is bound by residues 1923 to 1928 (AVGKSL), Glu-2023, Asp-2074, Lys-2417, and Ser-2492. Residues Cys-3957, Cys-3960, Cys-3972, His-3974, Cys-3977, Cys-3980, Cys-3993, Cys-3996, Cys-4451, and His-4455 each contribute to the Zn(2+) site. The RING-type zinc finger occupies 3957–3997 (CRVCLMELSEPFALPCEHVFCRSCLRRSMEREEAQHCPVCR). The RZ-type zinc-finger motif lies at 4429–4501 (MPDDHTSEAK…AYGDYDRTRP (73 aa)). The Nucleophile; for E3 ubiquitin-lipopolysaccharide ligase activity role is filled by Cys-4462. Positions 4471 and 4474 each coordinate Zn(2+).

The protein belongs to the AAA ATPase family.

The protein localises to the cytoplasm. It localises to the cytosol. Its subcellular location is the lipid droplet. The enzyme catalyses S-ubiquitinyl-[E2 ubiquitin-conjugating enzyme]-L-cysteine + [acceptor protein]-L-lysine = [E2 ubiquitin-conjugating enzyme]-L-cysteine + N(6)-ubiquitinyl-[acceptor protein]-L-lysine.. It catalyses the reaction ATP + H2O = ADP + phosphate + H(+). The protein operates within protein modification; protein ubiquitination. Its function is as follows. Atypical E3 ubiquitin ligase that can catalyze ubiquitination of both proteins and lipids, and which is involved in various processes, such as lipid metabolism, angiogenesis and cell-autonomous immunity. Acts as a key immune sensor by catalyzing ubiquitination of the lipid A moiety of bacterial lipopolysaccharide (LPS) via its RZ-type zinc-finger: restricts the proliferation of cytosolic bacteria, such as Salmonella, by generating the bacterial ubiquitin coat through the ubiquitination of LPS. Ubiquitination of LPS triggers cell-autonomous immunity, such as antibacterial autophagy, leading to degradation of the microbial invader. Involved in lipid metabolism by regulating fat storage and lipid droplet formation; act by inhibiting the lipolytic process. Also regulates lipotoxicity by inhibiting desaturation of fatty acids. Also acts as an E3 ubiquitin-protein ligase via its RING-type zinc finger. Involved in the non-canonical Wnt signaling pathway in vascular development: acts by mediating ubiquitination and degradation of proteins downstream of rspo3, leading to inhibit the non-canonical Wnt signaling pathway and promoting vessel regression. Also has ATPase activity; ATPase activity is required for ubiquitination of LPS. The polypeptide is E3 ubiquitin-protein ligase rnf213-beta (rnf213b) (Danio rerio (Zebrafish)).